A 1680-amino-acid polypeptide reads, in one-letter code: Sodium channel protein type 7 subunit alpha (1680 aa).

Over 1 to 117 the chain is Cytoplasmic; the sequence is MLTSPEPKGL…RRAVIKVLVH (117 aa). Residues 100 to 401 form an I repeat; it reads TLSPLSSLRR…ILTMAYEQEK (302 aa). Residues 118-137 traverse the membrane as a helical segment; sequence PLFRLLILISVLTDSILMCM. Residues 138–141 are Extracellular-facing; that stretch reads SNLP. A helical membrane pass occupies residues 142-167; it reads EWILAVENTLLGIYTFEILVKVIARG. Over 168–178 the chain is Cytoplasmic; that stretch reads IWAGSFSFLGD. Residues 179 to 196 traverse the membrane as a helical segment; that stretch reads LWNWLDFSVTLFELITRS. Residues 197–200 lie on the Extracellular side of the membrane; that stretch reads SPLS. Residues 201–219 form a helical membrane-spanning segment; the sequence is SLPMFKTIRTLRILKIIPL. The Cytoplasmic portion of the chain corresponds to 220–237; that stretch reads NHGLQSIVVTLVQCLKKL. A helical membrane pass occupies residues 238–259; sequence LGAIALALFFLTVSSLFGMGLF. Residues 260–338 lie on the Extracellular side of the membrane; that stretch reads MGNLKHKCVR…PDNGFTSFDN (79 aa). An intrachain disulfide couples cysteine 267 to cysteine 307. Asparagine 281 and asparagine 309 each carry an N-linked (GlcNAc...) asparagine glycan. Residues 339–366 constitute an intramembrane region (pore-forming); it reads FGWALLAMFRLMTQDYPELLYHQILYAS. A topological domain (extracellular) is located at residue glycine 367. The chain crosses the membrane as a helical span at residues 368–407; it reads KIYMIFFVLISFWFAFYMASLFLGILTMAYEQEKQRASEE. The Cytoplasmic portion of the chain corresponds to 408–505; sequence SRDMDSKCHQ…EFADRIITHP (98 aa). Residues 487-756 form an II repeat; the sequence is CSPCWIKLNE…QLAVAWIKMV (270 aa). A helical membrane pass occupies residues 506 to 521; that stretch reads LFDLFLVICIILNICF. Topologically, residues 522-530 are extracellular; the sequence is LALEHFPMS. A helical membrane pass occupies residues 531–559; sequence EELMSLLAIGNLVFIGIYTIEMILKIIAM. The Cytoplasmic segment spans residues 560–568; sequence HPYGYFQIS. The chain crosses the membrane as a helical span at residues 569 to 586; the sequence is WHIFDSILVVLGLTEMLL. Residues 587 to 592 lie on the Extracellular side of the membrane; the sequence is ADIEEI. Residues 593–608 traverse the membrane as a helical segment; it reads TVFILVPLIFIKLGKY. Residues 609-625 lie on the Cytoplasmic side of the membrane; sequence APPFKNLMRILGRALVA. The chain crosses the membrane as a helical span at residues 626–654; it reads LKDLVLLVSIFIYFSAVFGMKLFGRSYKD. Topologically, residues 655–672 are extracellular; that stretch reads CVCHVDQDCQRQRWHMSD. Intrachain disulfides connect cysteine 657/cysteine 663 and cysteine 695/cysteine 704. Positions 673-699 form an intramembrane region, pore-forming; that stretch reads FLHAYVTVFRILCGEWIETLWECMEVA. Residue glycine 700 is a topological domain, extracellular. A helical membrane pass occupies residues 701 to 731; sequence EAWCIPFYMMVILIGNLLILYLFVALVSSFA. Topologically, residues 732–933 are cytoplasmic; it reads SYDATTEVSK…KTCCKIVENS (202 aa). The segment covering 807–833 has biased composition (polar residues); the sequence is DQSSGTEKTPVTESESQSLIASPSVSE. Positions 807–874 are disordered; that stretch reads DQSSGTEKTP…MKQSSSSECS (68 aa). Serine 842 carries the phosphoserine modification. The stretch at 915 to 1223 is one III repeat; it reads NGKIWRNIRK…KKQYRALKKL (309 aa). The chain crosses the membrane as a helical span at residues 934–952; sequence WFECFIGLVTLLCTGTLAL. The Extracellular segment spans residues 953–960; sequence EDIYIDQR. The helical transmembrane segment at 961–989 threads the bilayer; sequence KTIKIFLEYGDMIFAYIFILEMLLKWVAY. The Cytoplasmic segment spans residues 990-997; that stretch reads GFKAYFSN. Residues 998–1019 form a helical membrane-spanning segment; the sequence is NWYKLDFMVVIVLCLSLIGKTR. A topological domain (extracellular) is located at residue glutamate 1020. A helical membrane pass occupies residues 1021-1039; that stretch reads DLNPLASIKFLRALRVLSQ. Over 1040-1054 the chain is Cytoplasmic; it reads FERMKVVLRALIKTT. Residues 1055-1079 form a helical membrane-spanning segment; the sequence is LPAVSVFLVCLMIWLLFSVMGVFLF. At 1080–1126 the chain is on the extracellular side; sequence AGKFYECIDPTRGERFSVFEVMNKSQCENLVFNESMPWENAKLNFDN. Cysteine 1086 and cysteine 1106 form a disulfide bridge. N-linked (GlcNAc...) asparagine glycosylation is found at asparagine 1102 and asparagine 1112. The pore-forming intramembrane region spans 1127 to 1153; that stretch reads VGNGFLSLFQVATFNGWISIMNSAIDS. Residues 1154 to 1166 are Extracellular-facing; the sequence is VGVYMQPSFEHSL. Residues 1167-1201 form a helical membrane-spanning segment; that stretch reads HMYTYFIIFVVFGLFLPLCMLIGVIIRNFNKQKIK. Topologically, residues 1202-1249 are cytoplasmic; the sequence is QGGSNIFITVKQKKQYRALKKLLYADSQKPAARPRNKFQGFICDVVTH. Residues 1232–1530 form an IV repeat; that stretch reads AARPRNKFQG…WNRFDPDRTQ (299 aa). Residues 1250-1271 form a helical membrane-spanning segment; it reads RVFNVIIILLICFQATTIMIQN. The Extracellular segment spans residues 1272-1275; it reads DEQS. A helical membrane pass occupies residues 1276 to 1304; the sequence is PQIETAVFWMNSLFTMLFTLECILKLTAF. The Cytoplasmic segment spans residues 1305-1311; the sequence is RCHYFTS. The chain crosses the membrane as a helical span at residues 1312–1337; it reads AWNVHDFMVVVFSITGLLLPLSIGQY. The Extracellular segment spans residues 1338-1340; that stretch reads FVP. Residues 1341–1361 traverse the membrane as a helical segment; it reads PSLVQLLLLSRIIHVLRPGKG. Over 1362 to 1376 the chain is Cytoplasmic; the sequence is PKVFHDLMLPLMLSL. Residues 1377–1401 form a helical membrane-spanning segment; sequence PALLNIALLIFLVMFIYAIFGMYNF. Residues 1402–1419 lie on the Extracellular side of the membrane; the sequence is AYVKKEAGINDVSNFETF. An intramembrane region (pore-forming) is located at residues 1420-1443; that stretch reads GSSMLCLFQVTTFSGWDGMLDAIF. Residues 1444 to 1467 are Extracellular-facing; sequence NSQWSDCDPDKINPGTQVRGDCGS. Residues cysteine 1450 and cysteine 1465 are joined by a disulfide bond. Residues 1468–1503 form a helical membrane-spanning segment; the sequence is PSVGIFYFVSYILISWLIIVNMYVVLIMEFLSIPSK. Topologically, residues 1504-1680 are cytoplasmic; sequence RKNRTLSEDD…EEKASIQTQI (177 aa). The segment at 1646–1680 is disordered; it reads KIQDIPEIDDGREDPNSKGVHSGQIEEKASIQTQI.

Belongs to the sodium channel (TC 1.A.1.10) family. SCN7A subfamily. The sodium channel formed by SCN7A is probably a heterooligomeric complex consisting of the ion conducting pore forming alpha subunit SCN7A and regulatory beta subunits such as SCN3B. Interacts with ATP1A1; activates ATP1A1 and thereby indirectly signals to nearby neurons to regulate sodium homeostasis. As to expression, not tissue specific but widely expressed.

It localises to the cell membrane. The catalysed reaction is Na(+)(in) = Na(+)(out). In terms of biological role, sodium leak channel functioning as an osmosensor regulating sodium ion levels in various tissues and organs. While most sodium channels are voltage-gated, SCN7A is not and lets sodium flow through membrane along its concentration gradient. In glial cells of the central nervous system, senses body-fluid sodium levels and controls salt intake behavior as well as voluntary water intake through activation of nearby neurons to maintain appropriate sodium levels in the body. By mediating sodium influx into keratinocytes, also plays a role in skin barrier homeostasis. The protein is Sodium channel protein type 7 subunit alpha of Rattus norvegicus (Rat).